An 82-amino-acid chain; its full sequence is MKVAILFLSILVLAVASESIEESRDDFAVEELGRATCAGQDQTCKVTCDCCGERGECVCGGPCICRQGNFLIAWYKLASCKK.

The N-terminal stretch at 1–17 (MKVAILFLSILVLAVAS) is a signal peptide. Residues 18–34 (ESIEESRDDFAVEELGR) constitute a propeptide that is removed on maturation. Cystine bridges form between C37-C51, C44-C57, C48-C80, C50-C65, and C59-C63.

As to expression, expressed by the venom gland.

The protein resides in the secreted. Functionally, reversible inhibitor of voltage-gated sodium channels (Nav). Delays the fast inactivation kinetics of neuronal-type sodium channels. In vivo, it induces rat penile erection. This effect may be due to the neuronal nitric oxide synthase (NOS1), since one of its selective inhibitor completely abolishes all the toxic effects of the toxin. This toxin also causes scratching, lacrimation, hypersalivation, sweating and agitation followed by spastic paralysis of the anterior and posterior extremities and death at dose levels of 0.24 mg/mouse. It is also insecticidal to the larval and adult forms of the house fly. This Phoneutria nigriventer (Brazilian armed spider) protein is Delta-ctenitoxin-Pn2c.